A 908-amino-acid polypeptide reads, in one-letter code: 5'-3' exoribonuclease 2 homolog (908 aa).

A CCHC-type zinc finger spans residues 263–280 (RPCDICNGFGHEMDKCVG). Disordered regions lie at residues 409 to 457 (RQRR…VGNY) and 821 to 908 (GGNQ…YRRF). The span at 432–454 (HGSLNQSAFGASAVGPNSQQRSV) shows a compositional bias: polar residues. Position 438 is a phosphoserine (S438). Composition is skewed to low complexity over residues 825 to 868 (GQSY…HNQR) and 878 to 908 (QRNF…YRRF).

The protein belongs to the 5'-3' exonuclease family. XRN2/RAT1 subfamily. As to quaternary structure, interacts with cuff and Rai1; the interaction with cuff may inhibit its role in RNA degradation.

The protein localises to the nucleus. In terms of biological role, a 5'-3' exoribonuclease. May promote the termination of transcription by RNA polymerase II and promote RNA degradation. Involved in turnover of piRNA precursors. The polypeptide is 5'-3' exoribonuclease 2 homolog (Drosophila melanogaster (Fruit fly)).